Reading from the N-terminus, the 247-residue chain is Probable dihydroorotate dehydrogenase B (NAD(+)), electron transfer subunit (247 aa).

Positions 1–87 (MLRRVTLKET…RGPYGNGFKE (87 aa)) constitute an FAD-binding FR-type domain. Cysteine 200, cysteine 205, cysteine 208, and cysteine 216 together coordinate [2Fe-2S] cluster.

It belongs to the PyrK family. In terms of assembly, heterotetramer of 2 PyrK and 2 PyrD type B subunits. Requires [2Fe-2S] cluster as cofactor. FAD is required as a cofactor.

The protein operates within pyrimidine metabolism; UMP biosynthesis via de novo pathway; orotate from (S)-dihydroorotate (NAD(+) route): step 1/1. Functionally, responsible for channeling the electrons from the oxidation of dihydroorotate from the FMN redox center in the PyrD type B subunit to the ultimate electron acceptor NAD(+). This Pyrococcus horikoshii (strain ATCC 700860 / DSM 12428 / JCM 9974 / NBRC 100139 / OT-3) protein is Probable dihydroorotate dehydrogenase B (NAD(+)), electron transfer subunit.